Reading from the N-terminus, the 298-residue chain is 3-hydroxyisobutyrate dehydrogenase (298 aa).

Residues 2-30 (TDIA…VNVF), 65-66 (LP), and threonine 96 contribute to the NAD(+) site. Lysine 171 is an active-site residue. Lysine 246 contributes to the NAD(+) binding site.

Belongs to the HIBADH-related family.

It catalyses the reaction 3-hydroxy-2-methylpropanoate + NAD(+) = 2-methyl-3-oxopropanoate + NADH + H(+). It participates in amino-acid degradation; L-valine degradation. This chain is 3-hydroxyisobutyrate dehydrogenase, found in Pseudomonas aeruginosa (strain ATCC 15692 / DSM 22644 / CIP 104116 / JCM 14847 / LMG 12228 / 1C / PRS 101 / PAO1).